Consider the following 237-residue polypeptide: MSIHISAKKGDIADKILLPGDPLRAKFIAENFLEDAVCFNEVRNMFGYTGTYKGHRVSVMGTGMGMPSISIYARELIVDYGVKTLIRVGTAGAIDPEVHVRELVLAQAAATNSNIIRNDFPEFDFPQIADFGLLDKAYHIAREMGVTTHVGNVLSSDVFYTNMPERNMALGKLGVKAIEMEAAALYYLATQHHVKALGIMTISDNLNDPTEDTTAEERQTTFTDMMKIGLETLIAND.

Position 4 (His4) interacts with a purine D-ribonucleoside. Phosphate is bound by residues Gly20, Arg24, Arg43, and 87 to 90; that span reads RVGT. A purine D-ribonucleoside is bound by residues 179–181 and 203–204; these read EME and SD. Asp204 (proton donor) is an active-site residue.

This sequence belongs to the PNP/UDP phosphorylase family. In terms of assembly, homohexamer; trimer of homodimers.

It catalyses the reaction a purine D-ribonucleoside + phosphate = a purine nucleobase + alpha-D-ribose 1-phosphate. The enzyme catalyses a purine 2'-deoxy-D-ribonucleoside + phosphate = a purine nucleobase + 2-deoxy-alpha-D-ribose 1-phosphate. In terms of biological role, catalyzes the reversible phosphorolytic breakdown of the N-glycosidic bond in the beta-(deoxy)ribonucleoside molecules, with the formation of the corresponding free purine bases and pentose-1-phosphate. The protein is Purine nucleoside phosphorylase DeoD-type of Streptococcus pyogenes serotype M5 (strain Manfredo).